The sequence spans 887 residues: Ubiquitin carboxyl-terminal hydrolase 4 (887 aa).

The Rhodanese domain occupies 202–328; sequence KEDSLLLIDV…WIKNGGEIDK (127 aa). Disordered stretches follow at residues 358–465 and 484–505; these read AFPD…PKPP and QKQNRSRSLEPQLPPIPSTLIR. The segment covering 387–402 has biased composition (polar residues); sequence TPPNGSSTLGRINSPV. The USP domain occupies 525–885; it reads VGLENMGNSC…SAYVLFYHRI (361 aa). Cys-534 serves as the catalytic Nucleophile. The active-site Proton acceptor is the His-842.

The protein belongs to the peptidase C19 family.

It is found in the cytoplasm. The protein localises to the late endosome membrane. It catalyses the reaction Thiol-dependent hydrolysis of ester, thioester, amide, peptide and isopeptide bonds formed by the C-terminal Gly of ubiquitin (a 76-residue protein attached to proteins as an intracellular targeting signal).. With respect to regulation, RFU1 is an inhibitor of deubiquitination activity. Ubiquitin thioesterase that acts at the late endosome/prevacuolar compartment to recover ubiquitin from ubiquitinated membrane proteins en route to the vacuole. Also removes ubiquitin from soluble proteins targeted to proteasomes. Is essential to maintain a normal level of free ubiquitin. Required for promoting coordination of DNA replication and avoids DNA overreplication. The protein is Ubiquitin carboxyl-terminal hydrolase 4 (DOA4) of Candida glabrata (strain ATCC 2001 / BCRC 20586 / JCM 3761 / NBRC 0622 / NRRL Y-65 / CBS 138) (Yeast).